The following is a 489-amino-acid chain: CDK5RAP3 protein homolog (489 aa).

This sequence belongs to the CDK5RAP3 family.

Substrate adapter of E3 ligase complexes mediating ufmylation, the covalent attachment of the ubiquitin-like modifier UFM1 to substrate proteins, and which is involved in various processes, such as ribosome recycling and reticulophagy (also called ER-phagy). The polypeptide is CDK5RAP3 protein homolog (Caenorhabditis elegans).